We begin with the raw amino-acid sequence, 167 residues long: RNA pyrophosphohydrolase (167 aa).

Positions 8–158 constitute a Nudix hydrolase domain; it reads PYRRNVGAML…KRDIYRTLVR (151 aa). Positions 49 to 70 match the Nudix box motif; sequence GGIDADEDPEEAVLRELREEIG.

The protein belongs to the Nudix hydrolase family. RppH subfamily. A divalent metal cation is required as a cofactor.

Its function is as follows. Accelerates the degradation of transcripts by removing pyrophosphate from the 5'-end of triphosphorylated RNA, leading to a more labile monophosphorylated state that can stimulate subsequent ribonuclease cleavage. This chain is RNA pyrophosphohydrolase, found in Gluconacetobacter diazotrophicus (strain ATCC 49037 / DSM 5601 / CCUG 37298 / CIP 103539 / LMG 7603 / PAl5).